The chain runs to 460 residues: tRNA-2-methylthio-N(6)-dimethylallyladenosine synthase (460 aa).

Residues 10–126 enclose the MTTase N-terminal domain; sequence GSYWITTFGC…LEVLLNRVDS (117 aa). Residues C19, C55, C89, C161, C165, and C168 each contribute to the [4Fe-4S] cluster site. The 238-residue stretch at 147–384 folds into the Radical SAM core domain; that stretch reads RDSSICGWVN…NALVERCARE (238 aa). Positions 387–455 constitute a TRAM domain; it reads ARYAGRTEEV…SFSLSGTPLP (69 aa).

The protein belongs to the methylthiotransferase family. MiaB subfamily. Monomer. The cofactor is [4Fe-4S] cluster.

Its subcellular location is the cytoplasm. The enzyme catalyses N(6)-dimethylallyladenosine(37) in tRNA + (sulfur carrier)-SH + AH2 + 2 S-adenosyl-L-methionine = 2-methylsulfanyl-N(6)-dimethylallyladenosine(37) in tRNA + (sulfur carrier)-H + 5'-deoxyadenosine + L-methionine + A + S-adenosyl-L-homocysteine + 2 H(+). In terms of biological role, catalyzes the methylthiolation of N6-(dimethylallyl)adenosine (i(6)A), leading to the formation of 2-methylthio-N6-(dimethylallyl)adenosine (ms(2)i(6)A) at position 37 in tRNAs that read codons beginning with uridine. In Parasynechococcus marenigrum (strain WH8102), this protein is tRNA-2-methylthio-N(6)-dimethylallyladenosine synthase.